Reading from the N-terminus, the 127-residue chain is Holotricin-2 (127 aa).

An N-terminal signal peptide occupies residues 1 to 15 (MMKLVIALCLIGISA). The propeptide occupies 16–55 (AYVVPVYYEIYPEDATFDEADIEPQLSPAELHHGSIRERR). The segment at 43-84 (PAELHHGSIRERRSLQPGAPSFPMPGSQLPTSVSGNVEKQGR) is disordered. The segment covering 45–56 (ELHHGSIRERRS) has biased composition (basic and acidic residues). Residues 70–84 (QLPTSVSGNVEKQGR) show a composition bias toward polar residues.

The protein belongs to the coleoptericin family. Hemolymph.

The protein resides in the secreted. Functionally, antibacterial activity against Gram-negative bacteria but not against Gram-positive bacteria. In Holotrichia diomphalia (Korean black chafer), this protein is Holotricin-2.